Reading from the N-terminus, the 163-residue chain is UPF0262 protein RPC_4416 (163 aa).

Belongs to the UPF0262 family.

The sequence is that of UPF0262 protein RPC_4416 from Rhodopseudomonas palustris (strain BisB18).